The sequence spans 520 residues: Cytochrome P450 monooxygenase 176 (520 aa).

N-linked (GlcNAc...) asparagine glycosylation is present at Asn6. A helical transmembrane segment spans residues 10-27 (LLVVAGALFLTFLTTRFI). N-linked (GlcNAc...) asparagine glycosylation is found at Asn141 and Asn270. Cys445 contributes to the heme binding site. N-linked (GlcNAc...) asparagine glycosylation is present at Asn517.

Belongs to the cytochrome P450 family. It depends on heme as a cofactor.

The protein localises to the membrane. Its pathway is secondary metabolite biosynthesis. Functionally, cytochrome P450 monooxygenase that is able to use delta(6)-protoilludene as a substrate to produce delta(6)-protoilludene-5-ol and an unidentified hydroxyprotoilludene. Is also able to use phenanthrene as a substrate for oxidation. This chain is Cytochrome P450 monooxygenase 176, found in Postia placenta (strain ATCC 44394 / Madison 698-R) (Brown rot fungus).